The sequence spans 338 residues: RNA 3'-terminal phosphate cyclase (338 aa).

ATP is bound by residues Q103 and 283–287; that span reads YLADQ. H308 (tele-AMP-histidine intermediate) is an active-site residue.

It belongs to the RNA 3'-terminal cyclase family. Type 1 subfamily.

The protein resides in the cytoplasm. It carries out the reaction a 3'-end 3'-phospho-ribonucleotide-RNA + ATP = a 3'-end 2',3'-cyclophospho-ribonucleotide-RNA + AMP + diphosphate. In terms of biological role, catalyzes the conversion of 3'-phosphate to a 2',3'-cyclic phosphodiester at the end of RNA. The mechanism of action of the enzyme occurs in 3 steps: (A) adenylation of the enzyme by ATP; (B) transfer of adenylate to an RNA-N3'P to produce RNA-N3'PP5'A; (C) and attack of the adjacent 2'-hydroxyl on the 3'-phosphorus in the diester linkage to produce the cyclic end product. The biological role of this enzyme is unknown but it is likely to function in some aspects of cellular RNA processing. This chain is RNA 3'-terminal phosphate cyclase, found in Escherichia coli O8 (strain IAI1).